Here is a 104-residue protein sequence, read N- to C-terminus: ATP-dependent Clp protease adapter protein ClpS (104 aa).

This sequence belongs to the ClpS family. As to quaternary structure, binds to the N-terminal domain of the chaperone ClpA.

Involved in the modulation of the specificity of the ClpAP-mediated ATP-dependent protein degradation. This Burkholderia mallei (strain NCTC 10247) protein is ATP-dependent Clp protease adapter protein ClpS.